The chain runs to 147 residues: Ras-related protein RabK2 (147 aa).

Residues 11-15 (NTHGS) and 63-66 (TKSD) contribute to the GTP site. Residue cysteine 145 is the site of S-geranylgeranyl cysteine attachment.

Belongs to the small GTPase superfamily. Rab family.

The protein localises to the cell membrane. This Dictyostelium discoideum (Social amoeba) protein is Ras-related protein RabK2 (rabK2).